Reading from the N-terminus, the 174-residue chain is UPF0398 protein YfdB (174 aa).

Belongs to the UPF0398 family.

The protein is UPF0398 protein YfdB (yfdB) of Lactococcus lactis subsp. lactis (strain IL1403) (Streptococcus lactis).